A 471-amino-acid chain; its full sequence is MPSEFSGKHVTVAGLGVSGVPAAKVLHGLGAQVTVVNDGDDERARTQAAELEPLGVTVRLGDGDTLPEGTELIVTAPGWKPTKPLFTAAGQAGVPVWGDVELAWRLRGLNGRKPAPWLAVTGTNGKTTTVQMLASILKAAGLRTAAVGNIGVSLLDAVTGEQEYDVLAVELSSYQLHWAPSLRAHSAAVLNLAPDHLDWHGSMEAYAADKGRIYEGNHVACVYNVADKATEDLVRAADVEEGCRAIGFTLGTPGPSQLGVVEGLLVDRAFVEDRQKNAQELAEVSDVNPPAPHNIANALAAAGLARAFGVSAAAVRDGLRAFTPDAHRIAHVADVDGVAYVDDSKATNTHATEASLAAYESIVWIAGGLAKGATFDELVAGAAKRLRGAVLIGADRALIREALARHAPEVPVVDLDRTDTGAMLQAVQEARRLARPGDTVLLAPACASMDMFTNYNQRGDAFAQAVRELGA.

122–128 (GTNGKTT) serves as a coordination point for ATP.

Belongs to the MurCDEF family.

It is found in the cytoplasm. It catalyses the reaction UDP-N-acetyl-alpha-D-muramoyl-L-alanine + D-glutamate + ATP = UDP-N-acetyl-alpha-D-muramoyl-L-alanyl-D-glutamate + ADP + phosphate + H(+). Its pathway is cell wall biogenesis; peptidoglycan biosynthesis. Its function is as follows. Cell wall formation. Catalyzes the addition of glutamate to the nucleotide precursor UDP-N-acetylmuramoyl-L-alanine (UMA). The protein is UDP-N-acetylmuramoylalanine--D-glutamate ligase of Streptomyces coelicolor (strain ATCC BAA-471 / A3(2) / M145).